The chain runs to 283 residues: Putative UTP--glucose-1-phosphate uridylyltransferase (283 aa).

The protein belongs to the UDPGP type 2 family.

The enzyme catalyses alpha-D-glucose 1-phosphate + UTP + H(+) = UDP-alpha-D-glucose + diphosphate. This Methanocaldococcus jannaschii (strain ATCC 43067 / DSM 2661 / JAL-1 / JCM 10045 / NBRC 100440) (Methanococcus jannaschii) protein is Putative UTP--glucose-1-phosphate uridylyltransferase.